A 1310-amino-acid polypeptide reads, in one-letter code: PAN2-PAN3 deadenylation complex catalytic subunit pan2 (1310 aa).

4 WD repeats span residues 22-61 (YHAG…RFTA), 67-105 (ETDG…SIRH), 106-144 (ESMQ…GEVV), and 145-184 (KELP…IKKQ). A linker region spans residues 318–463 (QFTEIGIPPR…NNDHWSLRPE (146 aa)). In terms of domain architecture, USP spans 463-850 (EAPPEYRICE…MPVVVMFQVK (388 aa)). The Zn(2+) site is built by histidine 525, cysteine 530, cysteine 535, cysteine 538, cysteine 645, cysteine 648, cysteine 700, and cysteine 703. The 174-residue stretch at 897-1070 (IAIDTEFIRL…EDAQTALKLY (174 aa)) folds into the Exonuclease domain. Residues aspartate 900, glutamate 902, aspartate 1009, and aspartate 1062 each contribute to the a divalent metal cation site. The disordered stretch occupies residues 1121–1169 (TPPVPAPGTTEGSFEISNSSTATTGGSALSATGGMGSASASSSMPSTPV). Residues 1139-1168 (SSTATTGGSALSATGGMGSASASSSMPSTP) show a composition bias toward low complexity.

It belongs to the peptidase C19 family. PAN2 subfamily. In terms of assembly, forms a heterotrimer with an asymmetric homodimer of the regulatory subunit par-2/pan3 to form the poly(A)-nuclease (PAN) deadenylation complex. A divalent metal cation serves as cofactor.

The protein resides in the cytoplasm. It carries out the reaction Exonucleolytic cleavage of poly(A) to 5'-AMP.. Positively regulated by the regulatory subunit par-2/pan3. Functionally, catalytic subunit of the poly(A)-nuclease (PAN) deadenylation complex, one of two cytoplasmic mRNA deadenylases involved in mRNA turnover. PAN specifically shortens poly(A) tails of RNA and the activity is stimulated by poly(A)-binding protein pabp-1. PAN deadenylation is followed by rapid degradation of the shortened mRNA tails by the CCR4-NOT complex. Deadenylated mRNAs are then degraded by two alternative mechanisms, namely exosome-mediated 3'-5' exonucleolytic degradation, or deadenylation-dependent mRNA decaping and subsequent 5'-3' exonucleolytic degradation by rgb-30/xrn1. May also be involved in post-transcriptional maturation of mRNA poly(A) tails. The sequence is that of PAN2-PAN3 deadenylation complex catalytic subunit pan2 (par-1) from Neurospora crassa (strain ATCC 24698 / 74-OR23-1A / CBS 708.71 / DSM 1257 / FGSC 987).